Consider the following 84-residue polypeptide: Cytochrome b559 subunit alpha (84 aa).

The chain crosses the membrane as a helical span at residues 22 to 36 (VIHSITIPSLFVAGW). Histidine 24 serves as a coordination point for heme.

The protein belongs to the PsbE/PsbF family. Heterodimer of an alpha subunit and a beta subunit. PSII is composed of 1 copy each of membrane proteins PsbA, PsbB, PsbC, PsbD, PsbE, PsbF, PsbH, PsbI, PsbJ, PsbK, PsbL, PsbM, PsbT, PsbX, PsbY, PsbZ, Psb30/Ycf12, at least 3 peripheral proteins of the oxygen-evolving complex and a large number of cofactors. It forms dimeric complexes. Heme b is required as a cofactor.

It is found in the plastid. The protein localises to the chloroplast thylakoid membrane. This b-type cytochrome is tightly associated with the reaction center of photosystem II (PSII). PSII is a light-driven water:plastoquinone oxidoreductase that uses light energy to abstract electrons from H(2)O, generating O(2) and a proton gradient subsequently used for ATP formation. It consists of a core antenna complex that captures photons, and an electron transfer chain that converts photonic excitation into a charge separation. The sequence is that of Cytochrome b559 subunit alpha from Gracilaria tenuistipitata var. liui (Red alga).